We begin with the raw amino-acid sequence, 862 residues long: DNA mismatch repair protein MutS (862 aa).

618 to 625 (GPNMGGKS) contributes to the ATP binding site. A disordered region spans residues 799–824 (QLESRDNQASPAVASAPQQQSLSLSP). Low complexity predominate over residues 806–824 (QASPAVASAPQQQSLSLSP).

The protein belongs to the DNA mismatch repair MutS family.

In terms of biological role, this protein is involved in the repair of mismatches in DNA. It is possible that it carries out the mismatch recognition step. This protein has a weak ATPase activity. In Shewanella denitrificans (strain OS217 / ATCC BAA-1090 / DSM 15013), this protein is DNA mismatch repair protein MutS.